The chain runs to 188 residues: Acireductone dioxygenase (188 aa).

Fe(2+) is bound by residues histidine 97, histidine 99, glutamate 103, and histidine 141. Positions 97, 99, 103, and 141 each coordinate Ni(2+).

Belongs to the acireductone dioxygenase (ARD) family. In terms of assembly, monomer. Fe(2+) serves as cofactor. It depends on Ni(2+) as a cofactor.

It carries out the reaction 1,2-dihydroxy-5-(methylsulfanyl)pent-1-en-3-one + O2 = 3-(methylsulfanyl)propanoate + CO + formate + 2 H(+). The enzyme catalyses 1,2-dihydroxy-5-(methylsulfanyl)pent-1-en-3-one + O2 = 4-methylsulfanyl-2-oxobutanoate + formate + 2 H(+). The protein operates within amino-acid biosynthesis; L-methionine biosynthesis via salvage pathway; L-methionine from S-methyl-5-thio-alpha-D-ribose 1-phosphate: step 5/6. In terms of biological role, catalyzes 2 different reactions between oxygen and the acireductone 1,2-dihydroxy-3-keto-5-methylthiopentene (DHK-MTPene) depending upon the metal bound in the active site. Fe-containing acireductone dioxygenase (Fe-ARD) produces formate and 2-keto-4-methylthiobutyrate (KMTB), the alpha-ketoacid precursor of methionine in the methionine recycle pathway. Ni-containing acireductone dioxygenase (Ni-ARD) produces methylthiopropionate, carbon monoxide and formate, and does not lie on the methionine recycle pathway. This chain is Acireductone dioxygenase, found in Xanthomonas euvesicatoria pv. vesicatoria (strain 85-10) (Xanthomonas campestris pv. vesicatoria).